A 436-amino-acid polypeptide reads, in one-letter code: 3-ketoacyl-CoA thiolase (436 aa).

The Acyl-thioester intermediate role is filled by Cys99. Active-site proton acceptor residues include His392 and Cys422.

This sequence belongs to the thiolase-like superfamily. Thiolase family. Heterotetramer of two alpha chains (FadJ) and two beta chains (FadI).

The protein resides in the cytoplasm. The enzyme catalyses an acyl-CoA + acetyl-CoA = a 3-oxoacyl-CoA + CoA. Its pathway is lipid metabolism; fatty acid beta-oxidation. Functionally, catalyzes the final step of fatty acid oxidation in which acetyl-CoA is released and the CoA ester of a fatty acid two carbons shorter is formed. This chain is 3-ketoacyl-CoA thiolase, found in Shewanella pealeana (strain ATCC 700345 / ANG-SQ1).